The following is a 730-amino-acid chain: Elongation factor 2 (730 aa).

The region spanning 19 to 260 (KFIRNIGIVA…MVVKHLPDPF (242 aa)) is the tr-type G domain. GTP-binding positions include 28–35 (AHIDHGKT), 94–98 (DTPGH), and 148–151 (NKVD). Position 597 is a diphthamide (H597).

This sequence belongs to the TRAFAC class translation factor GTPase superfamily. Classic translation factor GTPase family. EF-G/EF-2 subfamily.

It localises to the cytoplasm. Its function is as follows. Catalyzes the GTP-dependent ribosomal translocation step during translation elongation. During this step, the ribosome changes from the pre-translocational (PRE) to the post-translocational (POST) state as the newly formed A-site-bound peptidyl-tRNA and P-site-bound deacylated tRNA move to the P and E sites, respectively. Catalyzes the coordinated movement of the two tRNA molecules, the mRNA and conformational changes in the ribosome. The chain is Elongation factor 2 from Methanosphaerula palustris (strain ATCC BAA-1556 / DSM 19958 / E1-9c).